The primary structure comprises 838 residues: Protein kintoun (838 aa).

Disordered regions lie at residues 106–125 (RPKN…LNWS), 212–238 (NPTA…GKPE), 370–411 (LRHF…TSSP), 557–696 (NAPL…DSCS), and 776–838 (QQRR…EMDD). Positions 114 to 125 (DPSSGSRGLNWS) are enriched in polar residues. Basic and acidic residues predominate over residues 370–380 (LRHFSREDSGV). Phosphoserine is present on Ser378. Acidic residues predominate over residues 389-398 (PVEEDPDGEL). Residues 557-572 (NAPLDVEFERNQEGHA) show a composition bias toward basic and acidic residues. The segment covering 583–592 (EEEEEEEDKE) has biased composition (acidic residues). Residues 601 to 611 (DQQQQQQVQNK) show a composition bias toward low complexity. Basic residues-rich tracts occupy residues 612–623 (KSGKKQRKRNKK) and 673–683 (RSHRGILKRFS). Phosphoserine is present on Ser781. Positions 789 to 802 (EETRGSALKQKENP) are enriched in basic and acidic residues.

It belongs to the PIH1 family. Kintoun subfamily. As to quaternary structure, interacts with Pp1alpha-96A, Pp1-87B, Pp1-13C and flw.

The protein resides in the cytoplasm. In terms of biological role, required for cytoplasmic pre-assembly of axonemal dyneins, thereby playing a central role in motility in cilia and flagella. Involved in pre-assembly of dynein arm complexes in the cytoplasm before intraflagellar transport loads them for the ciliary compartment. This is Protein kintoun from Drosophila sechellia (Fruit fly).